A 293-amino-acid chain; its full sequence is Elongation factor Ts (293 aa).

The involved in Mg(2+) ion dislocation from EF-Tu stretch occupies residues 81–84 (TDFV).

This sequence belongs to the EF-Ts family.

It is found in the cytoplasm. Its function is as follows. Associates with the EF-Tu.GDP complex and induces the exchange of GDP to GTP. It remains bound to the aminoacyl-tRNA.EF-Tu.GTP complex up to the GTP hydrolysis stage on the ribosome. This is Elongation factor Ts from Thioalkalivibrio sulfidiphilus (strain HL-EbGR7).